Reading from the N-terminus, the 127-residue chain is Large ribosomal subunit protein bL21 (127 aa).

The protein belongs to the bacterial ribosomal protein bL21 family. As to quaternary structure, part of the 50S ribosomal subunit. Contacts protein L20.

Its function is as follows. This protein binds to 23S rRNA in the presence of protein L20. This Synechococcus elongatus (strain ATCC 33912 / PCC 7942 / FACHB-805) (Anacystis nidulans R2) protein is Large ribosomal subunit protein bL21.